The chain runs to 124 residues: Fluoride-specific ion channel FluC (124 aa).

4 helical membrane-spanning segments follow: residues 5–25, 32–52, 67–87, and 96–116; these read VYIA…SGFV, SFPY…GLIM, FAIT…SFET, and LLIA…CTWI. Glycine 75 and threonine 78 together coordinate Na(+).

Belongs to the fluoride channel Fluc/FEX (TC 1.A.43) family.

It is found in the cell inner membrane. The catalysed reaction is fluoride(in) = fluoride(out). With respect to regulation, na(+) is not transported, but it plays an essential structural role and its presence is essential for fluoride channel function. Functionally, fluoride-specific ion channel. Important for reducing fluoride concentration in the cell, thus reducing its toxicity. This Citrifermentans bemidjiense (strain ATCC BAA-1014 / DSM 16622 / JCM 12645 / Bem) (Geobacter bemidjiensis) protein is Fluoride-specific ion channel FluC.